Consider the following 115-residue polypeptide: MTRVKRGYVARKRRKNIFTLTSGFQGAHSKLFRTANQQGMRALASSYRDRNRRKRDLRRLWITRINAAARNNGISYNKLIQNLYQNQILLNRKMLAQIALLDTNCFSTIMKKINE.

Belongs to the bacterial ribosomal protein bL20 family.

It localises to the plastid. It is found in the chloroplast. Its function is as follows. Binds directly to 23S ribosomal RNA and is necessary for the in vitro assembly process of the 50S ribosomal subunit. It is not involved in the protein synthesizing functions of that subunit. The polypeptide is Large ribosomal subunit protein bL20c (Physcomitrium patens (Spreading-leaved earth moss)).